An 883-amino-acid polypeptide reads, in one-letter code: Chromatin structure-remodeling complex protein RSC30 (883 aa).

The zn(2)-C6 fungal-type DNA-binding region spans 14 to 45 (ACTQCRKRKIGCDRAKPICGNCVKYNKPDCFY). Disordered regions lie at residues 121-157 (QNNNTNNNTAPRQNSSTVSSNVHGNTIVRSDSPDVPS) and 241-273 (NTTANKINKTGENSKKGKVDGKRAGFDHQTSRT). Over residues 130–149 (APRQNSSTVSSNVHGNTIVR) the composition is skewed to polar residues. Position 150 is a phosphoserine (serine 150). Positions 241–251 (NTTANKINKTG) are enriched in polar residues. Positions 252–270 (ENSKKGKVDGKRAGFDHQT) are enriched in basic and acidic residues.

As to quaternary structure, forms a heteromer with RSC3. Interacts with NPL6. Component of the two forms of the RSC complex composed of at least either RSC1 or RSC2, and ARP7, ARP9, LDB7, NPL6, RSC3, RSC30, RSC4, RSC58, RSC6, RSC8, RSC9, SFH1, STH1, HTL1 and probably RTT102. The complexes interact with histone and histone variant components of centromeric chromatin. Component of a fungal-specific module (HTL1-LDB7-NPL6-RSC3-RSC30) within the RSC complex.

Its subcellular location is the nucleus. In terms of biological role, component of the chromatin structure-remodeling complex (RSC), which is involved in transcription regulation and nucleosome positioning. RSC is responsible for the transfer of a histone octamer from a nucleosome core particle to naked DNA. The reaction requires ATP and involves an activated RSC-nucleosome intermediate. Remodeling reaction also involves DNA translocation, DNA twist and conformational change. As a reconfigurer of centromeric and flanking nucleosomes, RSC complex is required both for proper kinetochore function in chromosome segregation and, via a PKC1-dependent signaling pathway, for organization of the cellular cytoskeleton. This subunit is required for transcription of ribosomal protein genes and genes involved in the integrity of the cell wall. Together with HTL1, LDB7, NPL6, RSC3 components, defines a fungal-specific module within the RSC complex that plays a role in many cellular functions including the maintenance of cell wall integrity. In Saccharomyces cerevisiae (strain ATCC 204508 / S288c) (Baker's yeast), this protein is Chromatin structure-remodeling complex protein RSC30 (RSC30).